Consider the following 230-residue polypeptide: All-trans retinoic acid-induced differentiation factor (230 aa).

An N-terminal signal peptide occupies residues 1–26; the sequence is MTANVTVSSMYLFTVLLLLFNVYVNS. Residues 27 to 200 are Extracellular-facing; sequence QDTDAQLCQM…YKCMRQGEFP (174 aa). Residues 152-194 enclose the EGF-like domain; the sequence is QKNACNQTVQMPLVCPENSLCSPYGPGFFECSCLNNFHGYKCM. 3 cysteine pairs are disulfide-bonded: C156-C172, C166-C182, and C184-C193. The chain crosses the membrane as a helical span at residues 201–221; the sequence is LVKVLGILTASTVVVSSVLWF. The Cytoplasmic segment spans residues 222-230; the sequence is TQRRKVKNT.

Its subcellular location is the nucleus envelope. It is found in the cell membrane. It localises to the lysosome membrane. Its function is as follows. Involved in osteoblast cell differentiation. May play a role in inducing the cell cycle arrest. The protein is All-trans retinoic acid-induced differentiation factor (atraid) of Danio rerio (Zebrafish).